Reading from the N-terminus, the 90-residue chain is RNA-binding protein Hfq (90 aa).

In terms of domain architecture, Sm spans 9–68 (DPFLNALRRERVPVSIYLVNGIKLQGQVESFDQFVILLKNTVSQMVYKHAISTVVPARPF). The interval 71 to 90 (TGHQNAQGGYGPQDDVPSGE) is disordered.

The protein belongs to the Hfq family. As to quaternary structure, homohexamer.

In terms of biological role, RNA chaperone that binds small regulatory RNA (sRNAs) and mRNAs to facilitate mRNA translational regulation in response to envelope stress, environmental stress and changes in metabolite concentrations. Also binds with high specificity to tRNAs. This Shewanella putrefaciens (strain CN-32 / ATCC BAA-453) protein is RNA-binding protein Hfq.